We begin with the raw amino-acid sequence, 125 residues long: Small ribosomal subunit protein eS8 (125 aa).

It belongs to the eukaryotic ribosomal protein eS8 family. In terms of assembly, part of the 30S ribosomal subunit.

This chain is Small ribosomal subunit protein eS8, found in Methanocorpusculum labreanum (strain ATCC 43576 / DSM 4855 / Z).